Reading from the N-terminus, the 653-residue chain is Macrolide export ATP-binding/permease protein MacB (653 aa).

One can recognise an ABC transporter domain in the interval 6–244 (LALSHICREF…AAASLPADKP (239 aa)). 42-49 (GSSGSGKS) contributes to the ATP binding site. 4 consecutive transmembrane segments (helical) span residues 277–297 (FLTM…VALG), 526–546 (LAFL…IGVM), 587–607 (LGGI…NLLL), and 617–637 (FSIG…GYFP).

The protein belongs to the ABC transporter superfamily. Macrolide exporter (TC 3.A.1.122) family. As to quaternary structure, homodimer.

The protein resides in the cell inner membrane. Non-canonical ABC transporter that contains transmembrane domains (TMD), which form a pore in the inner membrane, and an ATP-binding domain (NBD), which is responsible for energy generation. Confers resistance against macrolides. The protein is Macrolide export ATP-binding/permease protein MacB of Bradyrhizobium diazoefficiens (strain JCM 10833 / BCRC 13528 / IAM 13628 / NBRC 14792 / USDA 110).